The primary structure comprises 122 residues: Large ribosomal subunit protein uL14 (122 aa).

This sequence belongs to the universal ribosomal protein uL14 family. As to quaternary structure, part of the 50S ribosomal subunit. Forms a cluster with proteins L3 and L19. In the 70S ribosome, L14 and L19 interact and together make contacts with the 16S rRNA in bridges B5 and B8.

Its function is as follows. Binds to 23S rRNA. Forms part of two intersubunit bridges in the 70S ribosome. This chain is Large ribosomal subunit protein uL14, found in Pseudomonas savastanoi pv. phaseolicola (strain 1448A / Race 6) (Pseudomonas syringae pv. phaseolicola (strain 1448A / Race 6)).